The following is a 757-amino-acid chain: Mitofusin-2 (757 aa).

Topologically, residues 1–604 are cytoplasmic; the sequence is MSLLFSRCNS…TQEEFMVSMV (604 aa). The tract at residues 30-94 is part of a helix bundle domain, formed by helices from N-terminal and C-terminal regions; sequence KHFVTAKKKI…VRGISEVLAR (65 aa). The Dynamin-type G domain maps to 93 to 342; that stretch reads ARRHMKVAFF…VRMFEFQNFE (250 aa). The interval 103-110 is G1 motif; sequence GRTSNGKS. Residue 106-111 coordinates GTP; the sequence is SNGKST. Residue Thr-111 is modified to Phosphothreonine; by PINK1. Positions 129–130 are G2 motif; that stretch reads TT. Residues 199-202 are G3 motif; it reads DSPG. Residue 258–261 participates in GTP binding; sequence NRWD. A G4 motif region spans residues 258 to 261; sequence NRWD. Residue Glu-288 is a region of interest, G5 motif. Ser-305 and Lys-307 together coordinate GTP. A part of a helix bundle domain, formed by helices from N-terminal and C-terminal regions region spans residues 359–385; it reads EQHTVRAKQIAEAVRLIMDSLHMAARE. A coiled-coil region spans residues 391–434; sequence EEMREERQDRLKFIDKQLELLAQDYKLRIKQITEEVERQVSTAM. Phosphoserine; by PINK1 is present on Ser-442. A helical transmembrane segment spans residues 605-625; that stretch reads TGLASLTSRTSMGILVVGGVV. A topological domain (mitochondrial intermembrane) is located at residue Trp-626. Residues 627-647 form a helical membrane-spanning segment; it reads KAVGWRLIALSFGLYGLLYVY. Topologically, residues 648 to 757 are cytoplasmic; that stretch reads ERLTWTTKAK…FTHQYLQPSR (110 aa). Residues 695–738 adopt a coiled-coil conformation; that stretch reads TFAHLCQQVDVTRENLEQEIAAMNKKIEVLDSLQSKAKLLRNKA. A part of a helix bundle domain, formed by helices from N-terminal and C-terminal regions region spans residues 722–753; that stretch reads EVLDSLQSKAKLLRNKAGWLDSELNMFTHQYL.

Belongs to the TRAFAC class dynamin-like GTPase superfamily. Dynamin/Fzo/YdjA family. Mitofusin subfamily. In terms of assembly, forms homomultimers and heteromultimers with MFN1. Oligomerization is essential for mitochondrion fusion. Interacts with VAT1. Interacts with STOML2; may form heterooligomers. Interacts (phosphorylated) with PRKN. Interacts with EIF2AK3. Interacts with THG1L; THG1L probably functions as a guanyl-nucleotide exchange factor/GEF, activating MFN2. Post-translationally, phosphorylated by PINK1. In terms of processing, ubiquitinated by non-degradative ubiquitin by PRKN, promoting mitochondrial fusion; deubiquitination by USP30 inhibits mitochondrial fusion. Ubiquitinated by HUWE1 when dietary stearate (C18:0) levels are low; ubiquitination inhibits mitochondrial fusion. As to expression, ubiquitous; expressed at low level. Highly expressed in heart and kidney.

It is found in the mitochondrion outer membrane. The enzyme catalyses GTP + H2O = GDP + phosphate + H(+). Functionally, mitochondrial outer membrane GTPase that mediates mitochondrial clustering and fusion. Mitochondria are highly dynamic organelles, and their morphology is determined by the equilibrium between mitochondrial fusion and fission events. Overexpression induces the formation of mitochondrial networks. Membrane clustering requires GTPase activity and may involve a major rearrangement of the coiled coil domains. Plays a central role in mitochondrial metabolism and may be associated with obesity and/or apoptosis processes. Plays an important role in the regulation of vascular smooth muscle cell proliferation. Involved in the clearance of damaged mitochondria via selective autophagy (mitophagy). Is required for PRKN recruitment to dysfunctional mitochondria. Involved in the control of unfolded protein response (UPR) upon ER stress including activation of apoptosis and autophagy during ER stress. Acts as an upstream regulator of EIF2AK3 and suppresses EIF2AK3 activation under basal conditions. This chain is Mitofusin-2, found in Homo sapiens (Human).